A 351-amino-acid chain; its full sequence is Centromere-binding protein 1 (351 aa).

At Met1 the chain carries N-acetylmethionine. Composition is skewed to polar residues over residues 1–10 (MNSLANNNKL), 43–52 (LLSQESNDGN), and 65–77 (KGTQSQYESGLTS). Disordered stretches follow at residues 1 to 164 (MNSL…TQQS), 196 to 233 (KKDISMQPGRRGRKPTTLATTDEWKKQRKDSHKEVERR), and 327 to 351 (YEDMHTHKKQENERKSTRSDNPHEA). Ser45 is modified (phosphoserine; by ATM or ATR). Residue Ser48 is modified to Phosphoserine. Phosphoserine is present on Ser84. Polar residues-rich tracts occupy residues 100–124 (VNYTDLIQGQEDSSDAHTSNQTNAN) and 138–164 (TPSNEGVKPNTSLEGMTSSPMESTQQS). The residue at position 138 (Thr138) is a Phosphothreonine. The bHLH domain maps to 222–270 (QRKDSHKEVERRRRENINTAINVLSDLLPVRESSKAAILACAAEYIQKL).

As to quaternary structure, binds DNA as a dimer. Associates with MET4 to form a heteromeric complex which also includes MET28.

The protein resides in the nucleus. Its subcellular location is the mitochondrion. It is found in the chromosome. It localises to the centromere. In terms of biological role, required for chromosome stability and methionine prototrophy. It is involved in chromosomal segregation. Binds to a highly conserved DNA sequence (5'-RTCACRTG-3'), called CDEI, found in centromeres and in several promoters. DNA-binding activity is enhanced by MET28. Required as an auxiliary factor for transcriptional activation of sulfur metabolism together with MET4 and MET28. The chain is Centromere-binding protein 1 (CBF1) from Saccharomyces cerevisiae (strain ATCC 204508 / S288c) (Baker's yeast).